Reading from the N-terminus, the 1147-residue chain is Putative ATP-dependent RNA helicase L377 (1147 aa).

The Helicase ATP-binding domain maps to 108-315 (INPNTPYRGL…VELINYLRPK (208 aa)). An ATP-binding site is contributed by 121 to 128 (WGTGVGKS). The DEAH box signature appears at 264–267 (DEAH).

This sequence belongs to the DEAD box helicase family. DEAH subfamily.

Its subcellular location is the virion. The enzyme catalyses ATP + H2O = ADP + phosphate + H(+). This is Putative ATP-dependent RNA helicase L377 from Acanthamoeba polyphaga (Amoeba).